The following is a 361-amino-acid chain: Cytosolic Fe-S cluster assembly factor CFD1 (361 aa).

An ATP-binding site is contributed by 37 to 44 (GKGGVGKS). [4Fe-4S] cluster-binding residues include Cys-218 and Cys-221. A disordered region spans residues 293-314 (HSQSAAAQLPNSGDTESLTPAG).

This sequence belongs to the Mrp/NBP35 ATP-binding proteins family. NUBP2/CFD1 subfamily. As to quaternary structure, heterotetramer of 2 NBP35 and 2 CFD1 chains. It depends on [4Fe-4S] cluster as a cofactor.

It localises to the cytoplasm. Component of the cytosolic iron-sulfur (Fe/S) protein assembly (CIA) machinery. Required for maturation of extramitochondrial Fe-S proteins. The NBP35-CFD1 heterotetramer forms a Fe-S scaffold complex, mediating the de novo assembly of an Fe-S cluster and its transfer to target apoproteins. The protein is Cytosolic Fe-S cluster assembly factor CFD1 of Mycosarcoma maydis (Corn smut fungus).